A 483-amino-acid polypeptide reads, in one-letter code: Arginine/agmatine antiporter (483 aa).

12 helical membrane-spanning segments follow: residues 11–31, 41–61, 85–105, 124–144, 157–177, 208–228, 239–259, 289–309, 336–356, 364–384, 415–435, and 458–478; these read ILGTLALTGIVISSMIGGGIF, ASAGAVMLAWMLSGIGIFFIA, GFGPYVGFTIAWGYWLCQIFG, YFAGGNTIPAILLGSLLIWIF, FVNIIGAVCTLIPLLLFILIT, STMLVTLWAFIGIEGAVVISG, ATILGFSGCLLIYVLLSLLPF, VLMNTGLLIAVLTSWLSWTIL, PSFSLFMTSGLMQITMLLVYF, MLEITGVMVLPAYLTSSLFLV, LWLIYAGGLQHLFMVAILLAL, and EILKMTIVALAALLAIFLFSA.

It belongs to the amino acid-polyamine-organocation (APC) superfamily. Basic amino acid/polyamine antiporter (APA) (TC 2.A.3.2) family.

The protein localises to the cell inner membrane. In terms of biological role, catalyzes the exchange of L-arginine for agmatine. The arginine uptake by the bacterium in the macrophage may be a virulence factor against the host innate immune response. The protein is Arginine/agmatine antiporter (aaxC) of Chlamydia trachomatis serovar A (strain ATCC VR-571B / DSM 19440 / HAR-13).